A 159-amino-acid chain; its full sequence is Protein US8.5 (159 aa).

The segment at 27 to 107 is disordered; sequence SSQPLDPEGP…APSPHPRPPG (81 aa). Residues 80–91 are compositionally biased toward basic and acidic residues; the sequence is SDERGPPRHDRP.

It belongs to the HHV-1 US8.5 protein family. In terms of processing, phosphorylated.

The protein localises to the host nucleus. The protein resides in the host nucleolus. This chain is Protein US8.5, found in Human herpesvirus 1 (strain 17) (HHV-1).